Here is a 334-residue protein sequence, read N- to C-terminus: S-adenosylmethionine:tRNA ribosyltransferase-isomerase (334 aa).

The protein belongs to the QueA family. In terms of assembly, monomer.

The protein resides in the cytoplasm. The enzyme catalyses 7-aminomethyl-7-carbaguanosine(34) in tRNA + S-adenosyl-L-methionine = epoxyqueuosine(34) in tRNA + adenine + L-methionine + 2 H(+). Its pathway is tRNA modification; tRNA-queuosine biosynthesis. In terms of biological role, transfers and isomerizes the ribose moiety from AdoMet to the 7-aminomethyl group of 7-deazaguanine (preQ1-tRNA) to give epoxyqueuosine (oQ-tRNA). This chain is S-adenosylmethionine:tRNA ribosyltransferase-isomerase, found in Rubrobacter xylanophilus (strain DSM 9941 / JCM 11954 / NBRC 16129 / PRD-1).